The primary structure comprises 824 residues: Mucosa-associated lymphoid tissue lymphoma translocation protein 1 (824 aa).

The interval 1–27 (MSLLGDPLQALPPSAAPTGPLLAPPAG) is disordered. Serine 2 bears the N-acetylserine mark. The segment covering 11-27 (LPPSAAPTGPLLAPPAG) has biased composition (low complexity). The Death domain maps to 39–126 (RRLSELLDQA…EVLQLLSPPG (88 aa)). 2 consecutive Ig-like C2-type domains span residues 125-201 (PGIK…FEFS) and 212-305 (PESF…KKVE). The residue at position 135 (serine 135) is a Phosphoserine. 2 disulfide bridges follow: cysteine 147/cysteine 190 and cysteine 248/cysteine 290. Residues 348–562 (IGNMNYREHP…SLSEKRALTD (215 aa)) are caspase-like. The Nuclear export signal motif lies at 369-376 (LTNLLRQL). Residues histidine 415 and cysteine 464 contribute to the active site.

This sequence belongs to the peptidase C14B family. Homooligomer; forms oligomers which bind to TRAF6. Forms a complex with CARD14 and MALT1; resulting in the formation of a CBM (CARD14-BCL10-MALT1) complex. Forms a complex with CARD11 and MALT1; resulting in the formation of a CBM (CARD11-BCL10-MALT1) complex. Forms a complex with CARD9 and MALT1; resulting in the formation of a CBM (CARD9-BCL10-MALT1) complex. Highly expressed in peripheral blood mononuclear cells. Detected at lower levels in bone marrow, thymus and lymph node, and at very low levels in colon and lung.

It is found in the cytoplasm. Its subcellular location is the perinuclear region. The protein localises to the nucleus. Its function is as follows. Protease that enhances BCL10-induced activation: acts via formation of CBM complexes that channel adaptive and innate immune signaling downstream of CARD domain-containing proteins (CARD9, CARD11 and CARD14) to activate NF-kappa-B and MAP kinase p38 pathways which stimulate expression of genes encoding pro-inflammatory cytokines and chemokines. Mediates BCL10 cleavage: MALT1-dependent BCL10 cleavage plays an important role in T-cell antigen receptor-induced integrin adhesion. Involved in the induction of T helper 17 cells (Th17) differentiation. Cleaves RC3H1 and ZC3H12A in response to T-cell receptor (TCR) stimulation which releases their cooperatively repressed targets to promote Th17 cell differentiation. Also mediates cleavage of N4BP1 in T-cells following TCR-mediated activation, leading to N4BP1 inactivation. May also have ubiquitin ligase activity: binds to TRAF6, inducing TRAF6 oligomerization and activation of its ligase activity. The sequence is that of Mucosa-associated lymphoid tissue lymphoma translocation protein 1 from Homo sapiens (Human).